Consider the following 98-residue polypeptide: Large ribosomal subunit protein uL23 (98 aa).

Belongs to the universal ribosomal protein uL23 family. As to quaternary structure, part of the 50S ribosomal subunit. Contacts protein L29, and trigger factor when it is bound to the ribosome.

Its function is as follows. One of the early assembly proteins it binds 23S rRNA. One of the proteins that surrounds the polypeptide exit tunnel on the outside of the ribosome. Forms the main docking site for trigger factor binding to the ribosome. The protein is Large ribosomal subunit protein uL23 of Methylorubrum extorquens (strain CM4 / NCIMB 13688) (Methylobacterium extorquens).